We begin with the raw amino-acid sequence, 53 residues long: Sec-independent protein translocase protein TatA (53 aa).

A helical membrane pass occupies residues 1–21 (MGMSFSHLLIVLLIIFVLFGA).

It belongs to the TatA/E family. In terms of assembly, the Tat system comprises two distinct complexes: a TatABC complex, containing multiple copies of TatA, TatB and TatC subunits, and a separate TatA complex, containing only TatA subunits. Substrates initially bind to the TatABC complex, which probably triggers association of the separate TatA complex to form the active translocon.

The protein localises to the cell inner membrane. Its function is as follows. Part of the twin-arginine translocation (Tat) system that transports large folded proteins containing a characteristic twin-arginine motif in their signal peptide across membranes. TatA could form the protein-conducting channel of the Tat system. This is Sec-independent protein translocase protein TatA from Rickettsia typhi (strain ATCC VR-144 / Wilmington).